Reading from the N-terminus, the 288-residue chain is ATP synthase gamma chain (288 aa).

This sequence belongs to the ATPase gamma chain family. As to quaternary structure, F-type ATPases have 2 components, CF(1) - the catalytic core - and CF(0) - the membrane proton channel. CF(1) has five subunits: alpha(3), beta(3), gamma(1), delta(1), epsilon(1). CF(0) has three main subunits: a, b and c.

Its subcellular location is the cell inner membrane. In terms of biological role, produces ATP from ADP in the presence of a proton gradient across the membrane. The gamma chain is believed to be important in regulating ATPase activity and the flow of protons through the CF(0) complex. The chain is ATP synthase gamma chain from Acidovorax ebreus (strain TPSY) (Diaphorobacter sp. (strain TPSY)).